The following is a 281-amino-acid chain: MAKTRTSSLRNRRQLKPAVAATADDDKDGVFMVLLSCFKIFVCFAIVLITAVAWGLIMVLLLPWPYMRIRLGNLYGHIIGGLVIWIYGIPIKIQGSEHTKKRAIYISNHASPIDAFFVMWLAPIGTVGVAKKEVIWYPLLGQLYTLAHHIRIDRSNPAAAIQSMKEAVRVITEKNLSLIMFPEGTRSRDGRLLPFKKGFVHLALQSHLPIVPMILTGTHLAWRKGTFRVRPVPITVKYLPPINTDDWTVDKIDDYVKMIHDVYVRNLPASQKPLGSTNRSN.

A run of 3 helical transmembrane segments spans residues 40–60 (IFVC…IMVL), 71–91 (LGNL…GIPI), and 110–130 (ASPI…VGVA). Residues 109-114 (HASPID) carry the HXXXXD motif motif.

It belongs to the 1-acyl-sn-glycerol-3-phosphate acyltransferase family.

It is found in the membrane. It carries out the reaction a 1-acyl-sn-glycero-3-phosphate + an acyl-CoA = a 1,2-diacyl-sn-glycero-3-phosphate + CoA. It functions in the pathway phospholipid metabolism; CDP-diacylglycerol biosynthesis; CDP-diacylglycerol from sn-glycerol 3-phosphate: step 2/3. Functionally, converts lysophosphatidic acid (LPA) into phosphatidic acid by incorporating acyl moiety at the 2 position. This enzyme uses erucoyl-CoA as an acyl donor. The polypeptide is 1-acyl-sn-glycerol-3-phosphate acyltransferase (PLSC) (Limnanthes douglasii (Douglas' meadowfoam)).